The following is a 979-amino-acid chain: Probable serine/threonine-protein kinase iksA (979 aa).

Asn32, Asn110, Asn120, Asn121, Asn147, Asn155, Asn161, Asn220, Asn231, and Asn243 each carry an N-linked (GlcNAc...) asparagine glycan. The disordered stretch occupies residues 207–245 (SKSGVNNNNNNNNNDSTTTNNNNNNNTTPPQQQQQQNSS). A compositionally biased stretch (low complexity) spans 212-244 (NNNNNNNNNDSTTTNNNNNNNTTPPQQQQQQNS). The 308-residue stretch at 261 to 568 (FKEDIKIGSG…ISQILSTHFI (308 aa)) folds into the Protein kinase domain. Residues 267–275 (IGSGGFGSV) and Lys293 each bind ATP. Asp397 functions as the Proton acceptor in the catalytic mechanism. N-linked (GlcNAc...) asparagine glycosylation is found at Asn592, Asn597, Asn615, Asn645, Asn646, Asn663, and Asn699. Positions 593–602 (TSVHNTTAST) are enriched in polar residues. Residues 593–666 (TSVHNTTAST…LGNNNNNNTN (74 aa)) form a disordered region. Over residues 610–666 (SISTTNSTTSSSSSTATSSSLSSTTIATTSSSNAINNTTATTTTNSNLGNNNNNNTN) the composition is skewed to low complexity. Acidic residues predominate over residues 713–727 (NDDIIIDDDDDDDDS). The tract at residues 713–793 (NDDIIIDDDD…GNNGIRKALP (81 aa)) is disordered. Low complexity-rich tracts occupy residues 728 to 737 (TNNNDTNNTD) and 753 to 773 (NNKK…SSNK). N-linked (GlcNAc...) asparagine glycosylation is found at Asn731 and Asn734. The helical transmembrane segment at 846–866 (FPSPILLYPLLLLSLIPILVV) threads the bilayer. Residues Asn870 and Asn894 are each glycosylated (N-linked (GlcNAc...) asparagine). 2 helical membrane passes run 912–932 (INTI…VLLP) and 956–976 (FPLL…IFIF).

Belongs to the protein kinase superfamily. Ser/Thr protein kinase family.

The protein localises to the membrane. The enzyme catalyses L-seryl-[protein] + ATP = O-phospho-L-seryl-[protein] + ADP + H(+). It carries out the reaction L-threonyl-[protein] + ATP = O-phospho-L-threonyl-[protein] + ADP + H(+). This Dictyostelium discoideum (Social amoeba) protein is Probable serine/threonine-protein kinase iksA (iksA).